A 182-amino-acid polypeptide reads, in one-letter code: Early nodulin-like protein 14 (182 aa).

A signal peptide spans 1-28 (MFLSASMASSSLHVAIFSLIFLFSLAAA). In terms of domain architecture, Phytocyanin spans 29–133 (NEVTVGGKSG…GQKLSLVVIS (105 aa)). Cysteines 87 and 121 form a disulfide. 2 N-linked (GlcNAc...) asparagine glycosylation sites follow: N88 and N95. S160 is lipidated: GPI-anchor amidated serine. Positions 161-182 (GSVRLGGCYVVLGLVLGLCAWF) are cleaved as a propeptide — removed in mature form.

It belongs to the early nodulin-like (ENODL) family. In terms of assembly, interacts strongly and specifically with the extracellular domain of FERONIA at the synergid cell surface. In terms of tissue distribution, mostly expressed in seedlings and flowers, and, to a lower extent, in roots, stems and seeds, but barely in leaves.

The protein localises to the cell membrane. In terms of biological role, may act as a carbohydrate transporter. Required, together with ENODL11, ENODL12, ENODL13, ENODL14 and ENODL15, for male-female communication and pollen tube reception and burst at the synergid cell surface of the female gametophyte. The protein is Early nodulin-like protein 14 of Arabidopsis thaliana (Mouse-ear cress).